A 289-amino-acid chain; its full sequence is Ribosomal RNA small subunit methyltransferase A (289 aa).

6 residues coordinate S-adenosyl-L-methionine: asparagine 28, leucine 30, glycine 55, glutamate 77, aspartate 103, and asparagine 122.

Belongs to the class I-like SAM-binding methyltransferase superfamily. rRNA adenine N(6)-methyltransferase family. RsmA subfamily.

The protein resides in the cytoplasm. It carries out the reaction adenosine(1518)/adenosine(1519) in 16S rRNA + 4 S-adenosyl-L-methionine = N(6)-dimethyladenosine(1518)/N(6)-dimethyladenosine(1519) in 16S rRNA + 4 S-adenosyl-L-homocysteine + 4 H(+). Functionally, specifically dimethylates two adjacent adenosines (A1518 and A1519) in the loop of a conserved hairpin near the 3'-end of 16S rRNA in the 30S particle. May play a critical role in biogenesis of 30S subunits. The protein is Ribosomal RNA small subunit methyltransferase A of Jannaschia sp. (strain CCS1).